Consider the following 501-residue polypeptide: Beta-secretase 1 (501 aa).

Positions 1 to 21 (MAPALHWLLLWVGSGMLPAQG) are cleaved as a signal peptide. A propeptide spanning residues 22-45 (THLGIRLPLRSGLAGPPLGLRLPR) is cleaved from the precursor. Residues 22–457 (THLGIRLPLR…PQTDESTLMT (436 aa)) are Extracellular-facing. Positions 39–58 (LGLRLPRETDEESEEPGRRG) are disordered. The region spanning 75–416 (YYVEMTVGSP…DRARKRIGFA (342 aa)) is the Peptidase A1 domain. Asp-93 is an active-site residue. At Lys-126 the chain carries N6-acetyllysine. Asn-153, Asn-172, and Asn-223 each carry an N-linked (GlcNAc...) asparagine glycan. Intrachain disulfides connect Cys-216/Cys-420, Cys-278/Cys-443, and Cys-330/Cys-380. Lys-275, Lys-279, and Lys-285 each carry N6-acetyllysine. Asp-289 is a catalytic residue. 3 positions are modified to N6-acetyllysine: Lys-299, Lys-300, and Lys-307. Residue Asn-354 is glycosylated (N-linked (GlcNAc...) asparagine). A helical transmembrane segment spans residues 458–478 (IAYVMAAICALFMLPLCLMVC). 4 S-palmitoyl cysteine lipidation sites follow: Cys-474, Cys-478, Cys-482, and Cys-485. Residues 479 to 501 (QWRCLRCLRHQHDDFADDISLLK) are Cytoplasmic-facing. Positions 479-501 (QWRCLRCLRHQHDDFADDISLLK) are interaction with RTN3. The DXXLL motif lies at 496-500 (DISLL). Ser-498 carries the post-translational modification Phosphoserine. Lys-501 participates in a covalent cross-link: Glycyl lysine isopeptide (Lys-Gly) (interchain with G-Cter in ubiquitin).

It belongs to the peptidase A1 family. As to quaternary structure, monomer. Interacts (via DXXLL motif) with GGA1, GGA2 and GGA3 (via their VHS domain); the interaction highly increases when BACE1 is phosphorylated at Ser-498. Interacts with RTN1; RTN2; RTN3 and RTN4; the interaction leads to inhibition of amyloid precursor protein processing. Interacts with SNX6. Interacts with PCSK9. Interacts with NAT8 and NAT8B. Interacts with BIN1. Interacts (via extracellular domain) with ADAM10 (via extracellular domain). Interacts with SORL1; this interaction may affect binding with APP and hence reduce APP cleavage. Interacts with NRDC AND NRG1. Post-translationally, N-Glycosylated. Addition of a bisecting N-acetylglucosamine by MGAT3 blocks lysosomal targeting, further degradation and is required for maintaining stability under stress conditions. Palmitoylation mediates lipid raft localization. In terms of processing, acetylated in the endoplasmic reticulum at Lys-126, Lys-275, Lys-279, Lys-285, Lys-299, Lys-300 and Lys-307. Acetylation by NAT8 and NAT8B is transient and deacetylation probably occurs in the Golgi. Acetylation regulates the maturation, the transport to the plasma membrane, the stability and the expression of the protein. Post-translationally, ubiquitinated at Lys-501, ubiquitination leads to lysosomal degradation. Monoubiquitinated and 'Lys-63'-linked polyubitinated. Deubiquitnated by USP8; inhibits lysosomal degradation. Phosphorylation at Ser-498 is required for interaction with GGA1 and retrograded transport from endosomal compartments to the trans-Golgi network. Non-phosphorylated BACE1 enters a direct recycling route to the cell surface. In terms of tissue distribution, expressed in the brain, specifically in neurons and astrocytes (at protein level).

The protein localises to the cell membrane. Its subcellular location is the golgi apparatus. It localises to the trans-Golgi network. It is found in the endoplasmic reticulum. The protein resides in the endosome. The protein localises to the late endosome. Its subcellular location is the early endosome. It localises to the cell surface. It is found in the cytoplasmic vesicle membrane. The protein resides in the membrane raft. The protein localises to the lysosome. Its subcellular location is the recycling endosome. It localises to the cell projection. It is found in the axon. The protein resides in the dendrite. It carries out the reaction Broad endopeptidase specificity. Cleaves Glu-Val-Asn-Leu-|-Asp-Ala-Glu-Phe in the Swedish variant of Alzheimer's amyloid precursor protein.. With respect to regulation, inhibited by RTN3 and RTN4. Functionally, responsible for the proteolytic processing of the amyloid precursor protein (APP). Cleaves at the N-terminus of the A-beta peptide sequence, between residues 671 and 672 of APP, leads to the generation and extracellular release of beta-cleaved soluble APP, and a corresponding cell-associated C-terminal fragment which is later released by gamma-secretase. Cleaves CHL1. This chain is Beta-secretase 1, found in Mus musculus (Mouse).